Reading from the N-terminus, the 451-residue chain is Probable V-type proton ATPase subunit H 1 (451 aa).

This sequence belongs to the V-ATPase H subunit family. As to quaternary structure, V-ATPase is a heteromultimeric enzyme made up of two complexes: the ATP-hydrolytic V1 complex and the proton translocation V0 complex. The V1 complex consists of three catalytic AB heterodimers that form a heterohexamer, three peripheral stalks each consisting of EG heterodimers, one central rotor including subunits D and F, and the regulatory subunits C and H. The proton translocation complex V0 consists of the proton transport subunit a, a ring of proteolipid subunits c9c'', rotary subunit d, subunits e and f, and the accessory subunits vah-19/Ac45 and vah-20/PRR.

Its function is as follows. Subunit of the V1 complex of vacuolar(H+)-ATPase (V-ATPase), a multisubunit enzyme composed of a peripheral complex (V1) that hydrolyzes ATP and a membrane integral complex (V0) that translocates protons. V-ATPase is responsible for acidifying and maintaining the pH of intracellular compartments and in some cell types, is targeted to the plasma membrane, where it is responsible for acidifying the extracellular environment. Subunit H is essential for V-ATPase activity, but not for the assembly of the complex. The polypeptide is Probable V-type proton ATPase subunit H 1 (Caenorhabditis elegans).